We begin with the raw amino-acid sequence, 873 residues long: Leucine--tRNA ligase (873 aa).

Residues 42–52 carry the 'HIGH' region motif; sequence PYPSGKLHMGH. The 'KMSKS' region motif lies at 628-632; the sequence is KMSKS. Lysine 631 contacts ATP.

Belongs to the class-I aminoacyl-tRNA synthetase family.

It localises to the cytoplasm. It carries out the reaction tRNA(Leu) + L-leucine + ATP = L-leucyl-tRNA(Leu) + AMP + diphosphate. This Azoarcus sp. (strain BH72) protein is Leucine--tRNA ligase.